A 257-amino-acid polypeptide reads, in one-letter code: uncharacterized protein (257 aa).

The chain crosses the membrane as a helical span at residues 6 to 26; that stretch reads IFWLNLAAIIIISIVVSGGMF.

The protein belongs to the staphylococcal tandem lipoprotein family.

The protein resides in the cell membrane. This is an uncharacterized protein from Staphylococcus aureus (strain N315).